The chain runs to 366 residues: Neutral protease 2 homolog BDBG_02110 (366 aa).

Residues 1 to 19 (MQLSSVLLTAAGLLAPVYS) form the signal peptide. Positions 23–184 (ISIGRRSEGL…RAKIHDHLAQ (162 aa)) are excised as a propeptide. N-linked (GlcNAc...) asparagine glycosylation is found at Asn-123 and Asn-192. Residues Cys-272 and Cys-290 are joined by a disulfide bond. Residue His-314 participates in Zn(2+) binding. The active site involves Glu-315. His-318 contacts Zn(2+).

Belongs to the peptidase M35 family. The cofactor is Zn(2+).

Its subcellular location is the secreted. It catalyses the reaction Preferential cleavage of bonds with hydrophobic residues in P1'. Also 3-Asn-|-Gln-4 and 8-Gly-|-Ser-9 bonds in insulin B chain.. Its function is as follows. Secreted metalloproteinase that allows assimilation of proteinaceous substrates. Shows high activities on basic nuclear substrates such as histone and protamine. The protein is Neutral protease 2 homolog BDBG_02110 of Blastomyces gilchristii (strain SLH14081) (Blastomyces dermatitidis).